A 158-amino-acid chain; its full sequence is Glutamyl-tRNA(Gln) amidotransferase subunit C, mitochondrial (158 aa).

It belongs to the GatC family. In terms of assembly, subunit of the heterotrimeric GatCAB amidotransferase (AdT) complex, composed of A, B and C subunits.

Its subcellular location is the mitochondrion. It carries out the reaction L-glutamyl-tRNA(Gln) + L-glutamine + ATP + H2O = L-glutaminyl-tRNA(Gln) + L-glutamate + ADP + phosphate + H(+). In terms of biological role, allows the formation of correctly charged Gln-tRNA(Gln) through the transamidation of misacylated Glu-tRNA(Gln) in the mitochondria. The reaction takes place in the presence of glutamine and ATP through an activated gamma-phospho-Glu-tRNA(Gln). The sequence is that of Glutamyl-tRNA(Gln) amidotransferase subunit C, mitochondrial from Drosophila grimshawi (Hawaiian fruit fly).